Reading from the N-terminus, the 1178-residue chain is DNA-directed RNA polymerase subunit beta' (1178 aa).

Residues cysteine 60, cysteine 62, cysteine 75, and cysteine 78 each coordinate Zn(2+). Mg(2+) is bound by residues aspartate 450, aspartate 452, and aspartate 454. Residues cysteine 795, cysteine 869, cysteine 876, and cysteine 879 each contribute to the Zn(2+) site.

This sequence belongs to the RNA polymerase beta' chain family. In terms of assembly, the RNAP catalytic core consists of 2 alpha, 1 beta, 1 beta' and 1 omega subunit. When a sigma factor is associated with the core the holoenzyme is formed, which can initiate transcription. Mg(2+) serves as cofactor. Requires Zn(2+) as cofactor.

It catalyses the reaction RNA(n) + a ribonucleoside 5'-triphosphate = RNA(n+1) + diphosphate. DNA-dependent RNA polymerase catalyzes the transcription of DNA into RNA using the four ribonucleoside triphosphates as substrates. This is DNA-directed RNA polymerase subunit beta' from Clostridium botulinum (strain Langeland / NCTC 10281 / Type F).